Here is a 30-residue protein sequence, read N- to C-terminus: Cycloviolacin-O1 (30 aa).

The segment at residues 1 to 30 (GIPCAESCVYIPCTVTALLGCSCSNRVCYN) is a cross-link (cyclopeptide (Gly-Asn)). Cystine bridges form between Cys4-Cys21, Cys8-Cys23, and Cys13-Cys28.

Post-translationally, this is a cyclic peptide. As to expression, expressed in leaves, petals, petioles and roots but not in runners (at protein level).

Its function is as follows. Probably participates in a plant defense mechanism. The chain is Cycloviolacin-O1 from Viola odorata (Sweet violet).